Reading from the N-terminus, the 417-residue chain is Glutamyl-tRNA(Gln) amidotransferase subunit D (417 aa).

The Asparaginase/glutaminase domain occupies 73–400 (EKVWLLATGG…EEVPRVLTTP (328 aa)). Active-site residues include threonine 83, threonine 157, aspartate 158, and lysine 236.

Belongs to the asparaginase 1 family. GatD subfamily. As to quaternary structure, heterodimer of GatD and GatE.

The catalysed reaction is L-glutamyl-tRNA(Gln) + L-glutamine + ATP + H2O = L-glutaminyl-tRNA(Gln) + L-glutamate + ADP + phosphate + H(+). Its function is as follows. Allows the formation of correctly charged Gln-tRNA(Gln) through the transamidation of misacylated Glu-tRNA(Gln) in organisms which lack glutaminyl-tRNA synthetase. The reaction takes place in the presence of glutamine and ATP through an activated gamma-phospho-Glu-tRNA(Gln). The GatDE system is specific for glutamate and does not act on aspartate. In Pyrobaculum aerophilum (strain ATCC 51768 / DSM 7523 / JCM 9630 / CIP 104966 / NBRC 100827 / IM2), this protein is Glutamyl-tRNA(Gln) amidotransferase subunit D.